The sequence spans 194 residues: tRNA (guanosine(18)-2'-O)-methyltransferase (194 aa).

S-adenosyl-L-methionine is bound by residues Thr-99, 122-126 (GAEKW), Ile-142, and Leu-151.

It belongs to the class IV-like SAM-binding methyltransferase superfamily. RNA methyltransferase TrmH family. Monomer.

The catalysed reaction is guanosine(18) in tRNA + S-adenosyl-L-methionine = 2'-O-methylguanosine(18) in tRNA + S-adenosyl-L-homocysteine + H(+). Its activity is regulated as follows. Stimulated by magnesium ions and spermine. Inhibited by S-adenosyl-homocysteine. Its function is as follows. Catalyzes the 2'-O methylation of guanosine at position 18 in tRNA. The protein is tRNA (guanosine(18)-2'-O)-methyltransferase of Thermus thermophilus (strain ATCC BAA-163 / DSM 7039 / HB27).